The following is an 877-amino-acid chain: Envelope glycoprotein gp160 (877 aa).

An N-terminal signal peptide occupies residues 1–19 (MKLTLLIGILLIGIGVVLN). The Extracellular segment spans residues 20-707 (TRQQWVTVFY…SWFDFSKWLN (688 aa)). N-linked (GlcNAc...) asparagine; by host glycans are attached at residues Asn36, Asn69, Asn118, Asn135, Asn148, Asn158, Asn173, Asn204, Asn216, Asn258, Asn261, Asn272, Asn282, Asn288, Asn300, Asn312, Asn322, Asn379, Asn420, Asn431, Asn495, and Asn498. Cystine bridges form between Cys102–Cys224, Cys109–Cys215, Cys114–Cys174, Cys237–Cys267, and Cys247–Cys259. The segment at 114-173 (CVELNSSEPTTTPKSTTASTTNITASTTTLPCVQNKTSTVLESCNETIIEKELNEEPASN) is V1. Residues 174 to 215 (CTFAMAGYVRDQKKKYSVVWNDAEIMCKKGNNSNRECYMIHC) are V2. The tract at residues 317-349 (CKRPGNKTVLPVTIMAGLVFHSQRYNTRLRQAW) is V3. Cysteines 317 and 350 form a disulfide. Disulfide bonds link Cys402/Cys478 and Cys409/Cys451. The interval 409–451 (CKMDWFLNYLNNRTVDPDHNPCNGTKGKGKAPGPCAQRTYVAC) is V4. Residues 494–501 (KNRTNVTL) are V5. Residues 544–564 (VPFVLGFLGFLGAAGTAMGAA) form a fusion peptide region. Residues 607–623 (LNARVTALEKYLEDQAR) form an immunosuppression region. N-linked (GlcNAc...) asparagine; by host glycans are attached at residues Asn652 and Asn668. The stretch at 668-692 (NITTQLEEARAQEEKNLDAYQKLSS) forms a coiled coil. The interval 689–710 (KLSSWSDFWSWFDFSKWLNILK) is MPER; binding to GalCer. A helical membrane pass occupies residues 708–728 (ILKIGFLDVLGIIGLRLLYTV). At 729 to 877 (YSCIARVRQG…VRQGLEGILN (149 aa)) the chain is on the cytoplasmic side. The short motif at 739-742 (YSPL) is the YXXL motif; contains endocytosis signal element. Positions 751–779 (WKGQPDNAEGPGEGGDKRKNSSEPWQKES) are disordered.

In terms of assembly, the mature envelope protein (Env) consists of a homotrimer of non-covalently associated gp120-gp41 heterodimers. The resulting complex protrudes from the virus surface as a spike. Interacts with host CD4 and CCR5. Gp120 also interacts with the C-type lectins CD209/DC-SIGN and CLEC4M/DC-SIGNR (collectively referred to as DC-SIGN(R)). As to quaternary structure, the mature envelope protein (Env) consists of a homotrimer of non-covalently associated gp120-gp41 heterodimers. The resulting complex protrudes from the virus surface as a spike. Post-translationally, specific enzymatic cleavages in vivo yield mature proteins. Envelope glycoproteins are synthesized as an inactive precursor that is heavily N-glycosylated and processed likely by host cell furin in the Golgi to yield the mature SU and TM proteins. The cleavage site between SU and TM requires the minimal sequence [KR]-X-[KR]-R.

The protein resides in the virion membrane. It is found in the host cell membrane. The protein localises to the host endosome membrane. Its function is as follows. The surface protein gp120 (SU) attaches the virus to the host lymphoid cell by binding to the primary receptor CD4. This interaction induces a structural rearrangement creating a high affinity binding site for a chemokine coreceptor like CCR5. This peculiar 2 stage receptor-interaction strategy allows gp120 to maintain the highly conserved coreceptor-binding site in a cryptic conformation, protected from neutralizing antibodies. These changes are transmitted to the transmembrane protein gp41 and are thought to activate its fusogenic potential by unmasking its fusion peptide. In terms of biological role, surface protein gp120 (SU) may target the virus to gut-associated lymphoid tissue (GALT) by binding host ITGA4/ITGB7 (alpha-4/beta-7 integrins), a complex that mediates T-cell migration to the GALT. Interaction between gp120 and ITGA4/ITGB7 would allow the virus to enter GALT early in the infection, infecting and killing most of GALT's resting CD4+ T-cells. This T-cell depletion is believed to be the major insult to the host immune system leading to AIDS. Functionally, the surface protein gp120 is a ligand for CD209/DC-SIGN and CLEC4M/DC-SIGNR, which are respectively found on dendritic cells (DCs), and on endothelial cells of liver sinusoids and lymph node sinuses. These interactions allow capture of viral particles at mucosal surfaces by these cells and subsequent transmission to permissive cells. DCs are professional antigen presenting cells, critical for host immunity by inducing specific immune responses against a broad variety of pathogens. They act as sentinels in various tissues where they take up antigen, process it, and present it to T-cells following migration to lymphoid organs. SIV subverts the migration properties of dendritic cells to gain access to CD4+ T-cells in lymph nodes. Virus transmission to permissive T-cells occurs either in trans (without DCs infection, through viral capture and transmission), or in cis (following DCs productive infection, through the usual CD4-gp120 interaction), thereby inducing a robust infection. In trans infection, bound virions remain infectious over days and it is proposed that they are not degraded, but protected in non-lysosomal acidic organelles within the DCs close to the cell membrane thus contributing to the viral infectious potential during DCs' migration from the periphery to the lymphoid tissues. On arrival at lymphoid tissues, intact virions recycle back to DCs' cell surface allowing virus transmission to CD4+ T-cells. Virion capture also seems to lead to MHC-II-restricted viral antigen presentation, and probably to the activation of SIV-specific CD4+ cells. The transmembrane protein gp41 (TM) acts as a class I viral fusion protein. Under the current model, the protein has at least 3 conformational states: pre-fusion native state, pre-hairpin intermediate state, and post-fusion hairpin state. During fusion of viral and target intracellular membranes, the coiled coil regions (heptad repeats) assume a trimer-of-hairpins structure, positioning the fusion peptide in close proximity to the C-terminal region of the ectodomain. The formation of this structure appears to drive apposition and subsequent fusion of viral and target cell membranes. Complete fusion occurs in host cell endosomes. The virus undergoes clathrin-dependent internalization long before endosomal fusion, thus minimizing the surface exposure of conserved viral epitopes during fusion and reducing the efficacy of inhibitors targeting these epitopes. Membranes fusion leads to delivery of the nucleocapsid into the cytoplasm. Its function is as follows. The envelope glycoprotein gp160 precursor down-modulates cell surface CD4 antigen by interacting with it in the endoplasmic reticulum and blocking its transport to the cell surface. In terms of biological role, the gp120-gp41 heterodimer allows rapid transcytosis of the virus through CD4 negative cells such as simple epithelial monolayers of the intestinal, rectal and endocervical epithelial barriers. Both gp120 and gp41 specifically recognize glycosphingolipids galactosyl-ceramide (GalCer) or 3' sulfo-galactosyl-ceramide (GalS) present in the lipid rafts structures of epithelial cells. Binding to these alternative receptors allows the rapid transcytosis of the virus through the epithelial cells. This transcytotic vesicle-mediated transport of virions from the apical side to the basolateral side of the epithelial cells does not involve infection of the cells themselves. The chain is Envelope glycoprotein gp160 (env) from Cercopithecidae (Old World monkeys).